The chain runs to 955 residues: Translation initiation factor IF-2 (955 aa).

The tract at residues 49 to 352 is disordered; it reads AFSQSSESTE…QAPSFGGVKI (304 aa). The span at 77–88 shows a compositional bias: low complexity; the sequence is PQQQTKASAPSA. Pro residues-rich tracts occupy residues 95–121, 149–159, 188–202, and 209–223; these read PAVPKPGPGLKPGPRPVPKPGPRPGPR, RPVPKPGPRPG, RPGPRPHPGMMPPRP, and PPRPQAPRPQAPRPG. Residues 225 to 235 are compositionally biased toward gly residues; that stretch reads GTAGGRPGSSA. The segment covering 238–264 has biased composition (pro residues); it reads PPRPVPRPGPRPSPMNMPASRPTPPGG. The span at 273-322 shows a compositional bias: gly residues; that stretch reads SGGGRGRGGGGGAGPRGGGAGGGAPRTGFGGRPGGGRGRGGTAGAFGRPG. A compositionally biased stretch (basic residues) spans 326 to 335; that stretch reads SRSRKSKKQR. Residues 448–620 form the tr-type G domain; it reads PRAPVVTVMG…IILTADAELD (173 aa). The tract at residues 457 to 464 is G1; the sequence is GHVDHGKT. Residue 457–464 participates in GTP binding; the sequence is GHVDHGKT. Residues 482–486 form a G2 region; that stretch reads GITQH. Residues 507–510 are G3; the sequence is DTPG. GTP is bound by residues 507-511 and 561-564; these read DTPGH and NKID. Positions 561–564 are G4; it reads NKID. The segment at 597–599 is G5; that stretch reads SAK.

It belongs to the TRAFAC class translation factor GTPase superfamily. Classic translation factor GTPase family. IF-2 subfamily.

It is found in the cytoplasm. Its function is as follows. One of the essential components for the initiation of protein synthesis. Protects formylmethionyl-tRNA from spontaneous hydrolysis and promotes its binding to the 30S ribosomal subunits. Also involved in the hydrolysis of GTP during the formation of the 70S ribosomal complex. The chain is Translation initiation factor IF-2 from Thermobifida fusca (strain YX).